A 561-amino-acid polypeptide reads, in one-letter code: DNA ligase (561 aa).

Glu249 contacts ATP. Lys251 acts as the N6-AMP-lysine intermediate in catalysis. Positions 256, 271, 301, 340, 417, and 423 each coordinate ATP.

It belongs to the ATP-dependent DNA ligase family. Requires Mg(2+) as cofactor.

The catalysed reaction is ATP + (deoxyribonucleotide)n-3'-hydroxyl + 5'-phospho-(deoxyribonucleotide)m = (deoxyribonucleotide)n+m + AMP + diphosphate.. Its function is as follows. DNA ligase that seals nicks in double-stranded DNA during DNA replication, DNA recombination and DNA repair. This Methanothermobacter thermautotrophicus (strain ATCC 29096 / DSM 1053 / JCM 10044 / NBRC 100330 / Delta H) (Methanobacterium thermoautotrophicum) protein is DNA ligase.